The sequence spans 153 residues: Antibacterial peptide PMAP-23 (153 aa).

Positions 1-29 are cleaved as a signal peptide; sequence METQRASLCLGRWSLWLLLLGLVVPSASA. Position 30 is a pyrrolidone carboxylic acid (Q30). Residues 30 to 130 constitute a propeptide that is removed on maturation; sequence QALSYREAVL…DITCNQLQSV (101 aa). Positions 61–80 are disordered; it reads DQPPKADEDPGTPKPVSFTV. 2 cysteine pairs are disulfide-bonded: C85-C96 and C107-C124.

This sequence belongs to the cathelicidin family.

Its subcellular location is the secreted. Functionally, exerts antimicrobial activity against both Gram-positive and negative bacteria at concentrations of 2-16 micro molar. Its activity appears to be mediated by its ability to damage bacterial membranes. The sequence is that of Antibacterial peptide PMAP-23 (PMAP23) from Sus scrofa (Pig).